A 350-amino-acid polypeptide reads, in one-letter code: Enoyl-[acyl-carrier-protein] reductase, mitochondrial (350 aa).

The N-terminal 12 residues, 1–12 (MWLGLRLFHRPF), are a transit peptide targeting the mitochondrion. Y68 (proton donor) is an active-site residue. NADP(+) contacts are provided by residues N141, 167–170 (NSGV), 190–192 (RDR), 259–262 (YGGM), 284–286 (FWV), and K345.

This sequence belongs to the zinc-containing alcohol dehydrogenase family. Quinone oxidoreductase subfamily. Homodimer. As to expression, expressed in the developing pronephros.

Its subcellular location is the mitochondrion. It carries out the reaction a 2,3-saturated acyl-[ACP] + NADP(+) = a (2E)-enoyl-[ACP] + NADPH + H(+). In terms of biological role, catalyzes the NADPH-dependent reduction of trans-2-enoyl thioesters in mitochondrial fatty acid synthesis (fatty acid synthesis type II). Fatty acid chain elongation in mitochondria uses acyl carrier protein (ACP) as an acyl group carrier, but the enzyme accepts both ACP and CoA thioesters as substrates in vitro. May provide the octanoyl chain used for lipoic acid biosynthesis, regulating protein lipoylation and mitochondrial respiratory activity. Involved in iron homeostasis; affecting Fe-S cluster assembly and ceramide metabolism. Required for proper morphology and bioenergetic functions of mitochondria. Required for maintenance of neurons. Functions in pronephros development, regulating late differentiation of all pronephric tubule segments. In Xenopus tropicalis (Western clawed frog), this protein is Enoyl-[acyl-carrier-protein] reductase, mitochondrial (mecr).